A 242-amino-acid polypeptide reads, in one-letter code: Probable transcriptional regulatory protein XAC3151 (242 aa).

Belongs to the TACO1 family.

The protein localises to the cytoplasm. The chain is Probable transcriptional regulatory protein XAC3151 from Xanthomonas axonopodis pv. citri (strain 306).